The chain runs to 251 residues: Hydroxyacylglutathione hydrolase (251 aa).

Positions 53, 55, 57, 58, 110, 127, and 165 each coordinate Zn(2+).

The protein belongs to the metallo-beta-lactamase superfamily. Glyoxalase II family. Monomer. Zn(2+) serves as cofactor.

It catalyses the reaction an S-(2-hydroxyacyl)glutathione + H2O = a 2-hydroxy carboxylate + glutathione + H(+). The protein operates within secondary metabolite metabolism; methylglyoxal degradation; (R)-lactate from methylglyoxal: step 2/2. Functionally, thiolesterase that catalyzes the hydrolysis of S-D-lactoyl-glutathione to form glutathione and D-lactic acid. The protein is Hydroxyacylglutathione hydrolase of Escherichia coli (strain SE11).